Here is a 242-residue protein sequence, read N- to C-terminus: Ethanolamine ammonia-lyase small subunit (242 aa).

Adenosylcob(III)alamin contacts are provided by valine 155 and glutamate 176.

It belongs to the EutC family. In terms of assembly, the basic unit is a heterodimer which dimerizes to form tetramers. The heterotetramers trimerize; 6 large subunits form a core ring with 6 small subunits projecting outwards. It depends on adenosylcob(III)alamin as a cofactor.

The protein localises to the bacterial microcompartment. It catalyses the reaction ethanolamine = acetaldehyde + NH4(+). The protein operates within amine and polyamine degradation; ethanolamine degradation. Its function is as follows. Catalyzes the deamination of various vicinal amino-alcohols to oxo compounds. Allows this organism to utilize ethanolamine as the sole source of nitrogen and carbon in the presence of external vitamin B12. The sequence is that of Ethanolamine ammonia-lyase small subunit from Clostridium acetobutylicum (strain ATCC 824 / DSM 792 / JCM 1419 / IAM 19013 / LMG 5710 / NBRC 13948 / NRRL B-527 / VKM B-1787 / 2291 / W).